Consider the following 514-residue polypeptide: Exoglucanase 1 (514 aa).

The N-terminal stretch at 1–17 (MYRKLAVISAFLATARA) is a signal peptide. At glutamine 18 the chain carries Pyrrolidone carboxylic acid. A catalytic region spans residues 18–453 (QSACTLQSET…GSTGNPSGGN (436 aa)). Disulfide bonds link cysteine 21-cysteine 89, cysteine 36-cysteine 42, cysteine 67-cysteine 88, cysteine 78-cysteine 84, cysteine 155-cysteine 414, cysteine 189-cysteine 227, cysteine 193-cysteine 226, cysteine 247-cysteine 273, cysteine 255-cysteine 260, and cysteine 278-cysteine 348. N-linked (GlcNAc) asparagine glycosylation occurs at asparagine 62. The active-site Nucleophile is glutamate 229. The active-site Proton donor/acceptor is the glutamate 234. Asparagine 287 carries N-linked (GlcNAc...) (high mannose) asparagine glycosylation. N-linked (GlcNAc) asparagine glycosylation occurs at asparagine 401. The span at 401-437 (NETSSTPGAVRGSCSTSSGVPAQVESQSPNAKVTFSN) shows a compositional bias: polar residues. A disordered region spans residues 401–481 (NETSSTPGAV…TGSSPGPTQS (81 aa)). The tract at residues 454–478 (PPGGNPPGTTTTRRPATTTGSSPGP) is linker. Over residues 460–479 (PGTTTTRRPATTTGSSPGPT) the composition is skewed to low complexity. O-linked (Man) threonine glycosylation is present at threonine 462. O-linked (Man...) threonine glycosylation is found at threonine 463, threonine 464, and threonine 465. A glycan (O-linked (Man) threonine) is linked at threonine 470. 2 O-linked (Man...) threonine glycosylation sites follow: threonine 471 and threonine 472. Serine 474 and serine 475 each carry an O-linked (Man) serine glycan. A CBM1 domain is found at 478–514 (PTQSHYGQCGGIGYSGPTVCASGTTCQVLNPYYSQCL). Threonine 479 is a glycosylation site (O-linked (Man) threonine). Residues serine 481 and serine 492 are each glycosylated (O-linked (Man) serine). 2 cysteine pairs are disulfide-bonded: cysteine 486–cysteine 503 and cysteine 497–cysteine 513.

It belongs to the glycosyl hydrolase 7 (cellulase C) family. N-glycosylated. A high mannose glycan is attached to Asn-287 (predominantly Man(8)GlcNAc(2)) and single GlcNAc occupancy is observed at Asn-62 and Asn-401 with some site heterogeneity depending on strains and fermentation conditions. In terms of processing, O-glycosylated. Within the linker domain, all 8 threonines are variably glycosylated with between at least one, and up to three, mannose residues per site. All serines in this domain are at least partially glycosylated with a single mannose residue. O-glycosylation of the cellulase linker provides protection from proteolysis. Linker glycans also contribute to binding affinity of cellobiohydrolases to cellulose.

It is found in the secreted. It carries out the reaction Hydrolysis of (1-&gt;4)-beta-D-glucosidic linkages in cellulose and cellotetraose, releasing cellobiose from the non-reducing ends of the chains.. Functionally, exocellobiohydrolases (CBH) that catalyzes the hydrolysis of 1,4-beta-D-glucosidic bonds in cellulose to release the disaccharide cellobiose. The degradation of cellulose involves an interplay between different cellulolytic enzymes. Hydrolysis starts with endoglucanases (EGs), which cut internal beta-1,4-glucosidic bonds in cellulose to reduce the polymerization degree of the substrate and create new chain ends for exocellobiohydrolases (CBHs). The CBHs release the disaccharide cellobiose from the non-reducing end of the cellulose polymer chain. Finally, beta-1,4-glucosidases hydrolyze the cellobiose and other short cello-oligosaccharides into glucose units. The sequence is that of Exoglucanase 1 (cbh1) from Hypocrea jecorina (strain ATCC 56765 / BCRC 32924 / NRRL 11460 / Rut C-30) (Trichoderma reesei).